We begin with the raw amino-acid sequence, 111 residues long: Large ribosomal subunit protein uL22 (111 aa).

Belongs to the universal ribosomal protein uL22 family. Part of the 50S ribosomal subunit.

Functionally, this protein binds specifically to 23S rRNA; its binding is stimulated by other ribosomal proteins, e.g. L4, L17, and L20. It is important during the early stages of 50S assembly. It makes multiple contacts with different domains of the 23S rRNA in the assembled 50S subunit and ribosome. Its function is as follows. The globular domain of the protein is located near the polypeptide exit tunnel on the outside of the subunit, while an extended beta-hairpin is found that lines the wall of the exit tunnel in the center of the 70S ribosome. This chain is Large ribosomal subunit protein uL22, found in Clostridium tetani (strain Massachusetts / E88).